Here is a 743-residue protein sequence, read N- to C-terminus: Polyribonucleotide nucleotidyltransferase (743 aa).

Mg(2+) contacts are provided by Asp-494 and Asp-500. One can recognise a KH domain in the interval Pro-561–Val-620. An S1 motif domain is found at Gly-630–Gln-704. Residues Glu-702–Arg-743 form a disordered region. The segment covering Asp-712–Arg-743 has biased composition (basic and acidic residues).

The protein belongs to the polyribonucleotide nucleotidyltransferase family. Requires Mg(2+) as cofactor.

The protein resides in the cytoplasm. The enzyme catalyses RNA(n+1) + phosphate = RNA(n) + a ribonucleoside 5'-diphosphate. Functionally, involved in mRNA degradation. Catalyzes the phosphorolysis of single-stranded polyribonucleotides processively in the 3'- to 5'-direction. This is Polyribonucleotide nucleotidyltransferase from Desulfovibrio desulfuricans (strain ATCC 27774 / DSM 6949 / MB).